The sequence spans 250 residues: UPF0736 protein RBAM_011410 (250 aa).

The protein belongs to the UPF0736 family.

In Bacillus velezensis (strain DSM 23117 / BGSC 10A6 / LMG 26770 / FZB42) (Bacillus amyloliquefaciens subsp. plantarum), this protein is UPF0736 protein RBAM_011410.